A 138-amino-acid chain; its full sequence is Ribonuclease VapC21 (138 aa).

The 123-residue stretch at 6–128 folds into the PINc domain; sequence LLDKSAAYRA…ERIAAITRQP (123 aa). Mg(2+) contacts are provided by Asp-8 and Asp-97.

Belongs to the PINc/VapC protein family. Mg(2+) serves as cofactor.

Functionally, toxic component of a type II toxin-antitoxin (TA) system. An RNase. Its toxic effect is neutralized by coexpression with cognate antitoxin VapB21. This Mycobacterium tuberculosis (strain CDC 1551 / Oshkosh) protein is Ribonuclease VapC21.